Here is a 605-residue protein sequence, read N- to C-terminus: Adenine deaminase (605 aa).

It belongs to the metallo-dependent hydrolases superfamily. Adenine deaminase family. Mn(2+) is required as a cofactor.

The catalysed reaction is adenine + H2O + H(+) = hypoxanthine + NH4(+). The sequence is that of Adenine deaminase from Staphylothermus marinus (strain ATCC 43588 / DSM 3639 / JCM 9404 / F1).